Consider the following 471-residue polypeptide: Putative multidrug resistance protein MdtD (471 aa).

Helical transmembrane passes span 12–32 (LWIVAFGFFMQSLDTTIVNTA), 49–69 (MIIVSYVLTVAVMLPASGWLA), 77–97 (IFFTAIVLFTAGSLFCAQAST), 102–124 (VMARVLQGVGGAMMVPVGRLTVM), 138–158 (FVTLPGQVGPLLGPALGGVLV), 165–185 (WIFLINIPVGIVGAIATLCLM), 195–215 (FDLSGFLLLAAGMATLTLALD), 220–240 (LGISPAWLAGLVAVGLCALLL), 263–283 (FSLGLGGSFAGRIGSGMLPFM), 286–306 (VFLQIGLGFSPFHAGLMMIPM), 329–351 (VLVASTLGLAAVSLLFMFSALAG), 393–413 (LLSMVMQLSMSIGVTIAGLLL), and 431–451 (VFLYTYLSMAAIIALPALIFS).

Belongs to the major facilitator superfamily. TCR/Tet family.

It localises to the cell inner membrane. The sequence is that of Putative multidrug resistance protein MdtD from Klebsiella pneumoniae subsp. pneumoniae (strain ATCC 700721 / MGH 78578).